The following is a 283-amino-acid chain: DegV domain-containing protein CPE0304 (283 aa).

The DegV domain maps to 3–281; it reads VKVITDSTSC…VKSVGIAYAR (279 aa). The hexadecanoate site is built by serine 60 and serine 92.

In terms of biological role, may bind long-chain fatty acids, such as palmitate, and may play a role in lipid transport or fatty acid metabolism. The chain is DegV domain-containing protein CPE0304 from Clostridium perfringens (strain 13 / Type A).